A 171-amino-acid polypeptide reads, in one-letter code: Shikimate kinase (171 aa).

Position 11 to 16 (11 to 16 (ATGKTT)) interacts with ATP. Threonine 15 provides a ligand contact to Mg(2+). Residues aspartate 33, arginine 57, and glycine 79 each coordinate substrate. Arginine 117 provides a ligand contact to ATP. Arginine 136 is a binding site for substrate.

The protein belongs to the shikimate kinase family. As to quaternary structure, monomer. It depends on Mg(2+) as a cofactor.

The protein localises to the cytoplasm. The catalysed reaction is shikimate + ATP = 3-phosphoshikimate + ADP + H(+). The protein operates within metabolic intermediate biosynthesis; chorismate biosynthesis; chorismate from D-erythrose 4-phosphate and phosphoenolpyruvate: step 5/7. Its function is as follows. Catalyzes the specific phosphorylation of the 3-hydroxyl group of shikimic acid using ATP as a cosubstrate. The polypeptide is Shikimate kinase (Thermoanaerobacter pseudethanolicus (strain ATCC 33223 / 39E) (Clostridium thermohydrosulfuricum)).